Here is a 188-residue protein sequence, read N- to C-terminus: dCTP deaminase (188 aa).

DCTP contacts are provided by residues 111–116, 135–137, Gln156, Tyr170, and Gln180; these read KSTYAR and TLE. Glu137 serves as the catalytic Proton donor/acceptor.

It belongs to the dCTP deaminase family. In terms of assembly, homotrimer.

The enzyme catalyses dCTP + H2O + H(+) = dUTP + NH4(+). It functions in the pathway pyrimidine metabolism; dUMP biosynthesis; dUMP from dCTP (dUTP route): step 1/2. In terms of biological role, catalyzes the deamination of dCTP to dUTP. The protein is dCTP deaminase of Nitrosomonas europaea (strain ATCC 19718 / CIP 103999 / KCTC 2705 / NBRC 14298).